A 443-amino-acid polypeptide reads, in one-letter code: D-lactate dehydrogenase (443 aa).

The Extracellular portion of the chain corresponds to 1–182 (MSWIDELSKI…GGKTIKNSSG (182 aa)). Positions 32–209 (RAAENFVVVK…TKATIRLFPQ (178 aa)) constitute an FAD-binding PCMH-type domain. The chain crosses the membrane as a helical span at residues 183–203 (YSLLHLLVGSEGTLAVITKAT). Over 204 to 383 (IRLFPQMRDM…WEKSYFEFRK (180 aa)) the chain is Cytoplasmic. Residues 384–404 (SLLSLAVSLGGVISGEHGIGA) form a helical membrane-spanning segment. Residues 405 to 443 (VKLSELEELFPEQFELMRQIKLLFDPKNILNPGKVVRKL) are Extracellular-facing.

Belongs to the FAD-binding oxidoreductase/transferase type 4 family. Requires FAD as cofactor. Zn(2+) serves as cofactor.

The protein localises to the cell membrane. It carries out the reaction (R)-lactate + A = pyruvate + AH2. In terms of biological role, catalyzes the dehydrogenation of (R)-lactate (D-lactate) to pyruvate. Is likely involved in the utilization of D-lactate as a sole source for both carbon and electrons for dissimilatory sulfate reduction. Cannot use L-lactate as substrate, and NAD(+), horse cytochrome c, methylene blue or dimethylnaphthoquinone as acceptors. Active in vitro with artificial electron acceptors such as 2,6-dichlorophenolindophenol (DCPIP); the physiological acceptor is not known, but potential acceptors include cytochromes or quinones. This chain is D-lactate dehydrogenase, found in Archaeoglobus fulgidus (strain ATCC 49558 / DSM 4304 / JCM 9628 / NBRC 100126 / VC-16).